A 631-amino-acid chain; its full sequence is MDHDYEKLGLKVGLEIHQQLNTKRKLFCNCPTKIRDDEPHGEIERVLRPSQSEMGHVDKAALLESKKEKKFIYQYYNDSTCLVELDDEPPHDVSPEAVDTALEVSTLMNMKMADEVQIMRKMVIDGSNTSGFQRTMFVSQEGFIETEYGNIGVTSLCLEEDACKKIEDGKDYTKYCVDRLGIPLLEITTEPDITSPKMGKEAARRIGTILRATGKVKRGLGTIRQDVNISIREGARIEVKGVQNLDLIEKIIENEVTRQISLNEIKEELLKRNAEVVDEIKDITELLKDTESKVLKSALKNKGVIRAILLKGFSGMIGREVQPGRRLGTEFSDRGKVLGGVGGLFHTDELPKYGITEEEVTKLKEYMNCGENDAVILVADKKNKVERALNAVIERAKESMIGIPEETRKALDDGNTSYLRPLPGAARMYPETDVPTITITEEKLEAIRNNLPEMPEEKLVRFVKEYELNEDLAKQMVMSYHVDLFESLSKKYSKIKPTLIATTLEATLKEIKREGLDTDLLTEEHLEELFKGLSEDKMSKEAVPDVIKGFIENPSKKLDEILEIKGMSSMSVDEVESIIEDIINQNISQVNEKGMGAMGLLMGRCMAQLRGKADGKLINTTLQKKLKEKVQ.

The protein belongs to the GatB/GatE family. GatE subfamily. In terms of assembly, heterodimer of GatD and GatE.

The enzyme catalyses L-glutamyl-tRNA(Gln) + L-glutamine + ATP + H2O = L-glutaminyl-tRNA(Gln) + L-glutamate + ADP + phosphate + H(+). In terms of biological role, allows the formation of correctly charged Gln-tRNA(Gln) through the transamidation of misacylated Glu-tRNA(Gln) in organisms which lack glutaminyl-tRNA synthetase. The reaction takes place in the presence of glutamine and ATP through an activated gamma-phospho-Glu-tRNA(Gln). The GatDE system is specific for glutamate and does not act on aspartate. This Methanococcus maripaludis (strain C5 / ATCC BAA-1333) protein is Glutamyl-tRNA(Gln) amidotransferase subunit E.